Here is a 1367-residue protein sequence, read N- to C-terminus: DNA polymerase III PolC-type (1367 aa).

The region spanning 358 to 513 (FVVLDFETTG…DDARVTAQVF (156 aa)) is the Exonuclease domain.

This sequence belongs to the DNA polymerase type-C family. PolC subfamily.

Its subcellular location is the cytoplasm. The enzyme catalyses DNA(n) + a 2'-deoxyribonucleoside 5'-triphosphate = DNA(n+1) + diphosphate. Its function is as follows. Required for replicative DNA synthesis. This DNA polymerase also exhibits 3' to 5' exonuclease activity. This chain is DNA polymerase III PolC-type, found in Thermotoga petrophila (strain ATCC BAA-488 / DSM 13995 / JCM 10881 / RKU-1).